The sequence spans 570 residues: Dihydroxy-acid dehydratase (570 aa).

[2Fe-2S] cluster is bound at residue C61. Position 94 (D94) interacts with Mg(2+). Residue C135 participates in [2Fe-2S] cluster binding. 2 residues coordinate Mg(2+): D136 and K137. An N6-carboxylysine modification is found at K137. Position 207 (C207) interacts with [2Fe-2S] cluster. E459 provides a ligand contact to Mg(2+). S485 acts as the Proton acceptor in catalysis.

Belongs to the IlvD/Edd family. Homodimer. Requires [2Fe-2S] cluster as cofactor. Mg(2+) serves as cofactor.

It carries out the reaction (2R)-2,3-dihydroxy-3-methylbutanoate = 3-methyl-2-oxobutanoate + H2O. The enzyme catalyses (2R,3R)-2,3-dihydroxy-3-methylpentanoate = (S)-3-methyl-2-oxopentanoate + H2O. The protein operates within amino-acid biosynthesis; L-isoleucine biosynthesis; L-isoleucine from 2-oxobutanoate: step 3/4. It functions in the pathway amino-acid biosynthesis; L-valine biosynthesis; L-valine from pyruvate: step 3/4. Functionally, functions in the biosynthesis of branched-chain amino acids. Catalyzes the dehydration of (2R,3R)-2,3-dihydroxy-3-methylpentanoate (2,3-dihydroxy-3-methylvalerate) into 2-oxo-3-methylpentanoate (2-oxo-3-methylvalerate) and of (2R)-2,3-dihydroxy-3-methylbutanoate (2,3-dihydroxyisovalerate) into 2-oxo-3-methylbutanoate (2-oxoisovalerate), the penultimate precursor to L-isoleucine and L-valine, respectively. This Lactococcus lactis subsp. cremoris (strain MG1363) protein is Dihydroxy-acid dehydratase.